Consider the following 284-residue polypeptide: Formamidopyrimidine-DNA glycosylase (284 aa).

Pro-2 (schiff-base intermediate with DNA) is an active-site residue. Glu-3 acts as the Proton donor in catalysis. The Proton donor; for beta-elimination activity role is filled by Lys-61. His-95, Arg-115, and Arg-157 together coordinate DNA. The FPG-type zinc finger occupies 243-277 (AVYGRAGQPCRRCGTAIVREPFMNRSSFRCPACQP). The active-site Proton donor; for delta-elimination activity is the Arg-267.

It belongs to the FPG family. As to quaternary structure, monomer. Zn(2+) serves as cofactor.

It carries out the reaction Hydrolysis of DNA containing ring-opened 7-methylguanine residues, releasing 2,6-diamino-4-hydroxy-5-(N-methyl)formamidopyrimidine.. It catalyses the reaction 2'-deoxyribonucleotide-(2'-deoxyribose 5'-phosphate)-2'-deoxyribonucleotide-DNA = a 3'-end 2'-deoxyribonucleotide-(2,3-dehydro-2,3-deoxyribose 5'-phosphate)-DNA + a 5'-end 5'-phospho-2'-deoxyribonucleoside-DNA + H(+). Functionally, involved in base excision repair of DNA damaged by oxidation or by mutagenic agents. Acts as a DNA glycosylase that recognizes and removes damaged bases. Has a preference for oxidized purines, such as 7,8-dihydro-8-oxoguanine (8-oxoG). Has AP (apurinic/apyrimidinic) lyase activity and introduces nicks in the DNA strand. Cleaves the DNA backbone by beta-delta elimination to generate a single-strand break at the site of the removed base with both 3'- and 5'-phosphates. This is Formamidopyrimidine-DNA glycosylase from Acidothermus cellulolyticus (strain ATCC 43068 / DSM 8971 / 11B).